We begin with the raw amino-acid sequence, 340 residues long: Tetraacyldisaccharide 4'-kinase (340 aa).

51 to 58 is an ATP binding site; sequence HMGGAGKT.

Belongs to the LpxK family.

It catalyses the reaction a lipid A disaccharide + ATP = a lipid IVA + ADP + H(+). It participates in glycolipid biosynthesis; lipid IV(A) biosynthesis; lipid IV(A) from (3R)-3-hydroxytetradecanoyl-[acyl-carrier-protein] and UDP-N-acetyl-alpha-D-glucosamine: step 6/6. Transfers the gamma-phosphate of ATP to the 4'-position of a tetraacyldisaccharide 1-phosphate intermediate (termed DS-1-P) to form tetraacyldisaccharide 1,4'-bis-phosphate (lipid IVA). This is Tetraacyldisaccharide 4'-kinase from Rhodopseudomonas palustris (strain TIE-1).